The chain runs to 66 residues: Cold shock-like protein CspLB (66 aa).

The 60-residue stretch at Gly4–Val63 folds into the CSD domain.

Homodimer.

It localises to the cytoplasm. The protein is Cold shock-like protein CspLB (cspLB) of Listeria monocytogenes serovar 1/2a (strain ATCC BAA-679 / EGD-e).